A 109-amino-acid polypeptide reads, in one-letter code: Nucleoid-associated protein PM0205 (109 aa).

Belongs to the YbaB/EbfC family. In terms of assembly, homodimer.

It localises to the cytoplasm. The protein localises to the nucleoid. Functionally, binds to DNA and alters its conformation. May be involved in regulation of gene expression, nucleoid organization and DNA protection. The sequence is that of Nucleoid-associated protein PM0205 from Pasteurella multocida (strain Pm70).